The following is a 158-amino-acid chain: NAD(P)H-quinone oxidoreductase subunit J, chloroplastic (158 aa).

Belongs to the complex I 30 kDa subunit family. In terms of assembly, NDH is composed of at least 16 different subunits, 5 of which are encoded in the nucleus.

It is found in the plastid. The protein localises to the chloroplast thylakoid membrane. It catalyses the reaction a plastoquinone + NADH + (n+1) H(+)(in) = a plastoquinol + NAD(+) + n H(+)(out). The catalysed reaction is a plastoquinone + NADPH + (n+1) H(+)(in) = a plastoquinol + NADP(+) + n H(+)(out). Functionally, NDH shuttles electrons from NAD(P)H:plastoquinone, via FMN and iron-sulfur (Fe-S) centers, to quinones in the photosynthetic chain and possibly in a chloroplast respiratory chain. The immediate electron acceptor for the enzyme in this species is believed to be plastoquinone. Couples the redox reaction to proton translocation, and thus conserves the redox energy in a proton gradient. This chain is NAD(P)H-quinone oxidoreductase subunit J, chloroplastic, found in Psilotum nudum (Whisk fern).